The primary structure comprises 195 residues: Heat shock protein beta-8 (195 aa).

A Phosphoserine modification is found at Ser-56. Position 62 is a phosphothreonine (Thr-62). An asymmetric dimethylarginine mark is found at Arg-70 and Arg-77. One can recognise a sHSP domain in the interval 73–184 (TATARFGVPA…TFGESSFNNE (112 aa)). A disordered region spans residues 175–195 (TFGESSFNNELPQDSQEVTCT). Positions 176-195 (FGESSFNNELPQDSQEVTCT) are enriched in polar residues.

The protein belongs to the small heat shock protein (HSP20) family. As to quaternary structure, monomer. Forms a ternary complex with BAG3 and HSPA1A. Component of the chaperone-assisted selective autophagy (CASA) complex consisting of BAG3, HSPA8/HSC70, HSPB8 and STUB1/CHIP. Interacts with HSPB1. Interacts with DNAJB6. Interacts with BAG3. Post-translationally, phosphorylated.

The protein resides in the cytoplasm. It is found in the nucleus. Involved in the chaperone-assisted selective autophagy (CASA), a crucial process for protein quality control, particularly in mechanical strained cells and tissues such as muscle. Displays temperature-dependent chaperone activity. The protein is Heat shock protein beta-8 (HSPB8) of Macaca mulatta (Rhesus macaque).